The sequence spans 430 residues: tRNA(Ile)-lysidine synthase (430 aa).

21-26 (SGGLDS) is a binding site for ATP.

This sequence belongs to the tRNA(Ile)-lysidine synthase family.

It is found in the cytoplasm. The enzyme catalyses cytidine(34) in tRNA(Ile2) + L-lysine + ATP = lysidine(34) in tRNA(Ile2) + AMP + diphosphate + H(+). In terms of biological role, ligates lysine onto the cytidine present at position 34 of the AUA codon-specific tRNA(Ile) that contains the anticodon CAU, in an ATP-dependent manner. Cytidine is converted to lysidine, thus changing the amino acid specificity of the tRNA from methionine to isoleucine. In Salmonella paratyphi A (strain ATCC 9150 / SARB42), this protein is tRNA(Ile)-lysidine synthase.